Reading from the N-terminus, the 297-residue chain is Protoheme IX farnesyltransferase (297 aa).

A run of 9 helical transmembrane segments spans residues 23–43, 49–69, 93–113, 117–137, 144–164, 171–191, 215–235, 238–258, and 275–295; these read VTQL…PGMP, VFGT…NCLI, IQVL…LYHL, LTMW…TVIL, NIVI…AAVA, AWVL…ALAL, RLHI…PYAI, SGAL…WYAW, and FSIL…WVGL.

It belongs to the UbiA prenyltransferase family. Protoheme IX farnesyltransferase subfamily.

It localises to the cell inner membrane. It carries out the reaction heme b + (2E,6E)-farnesyl diphosphate + H2O = Fe(II)-heme o + diphosphate. The protein operates within porphyrin-containing compound metabolism; heme O biosynthesis; heme O from protoheme: step 1/1. Its function is as follows. Converts heme B (protoheme IX) to heme O by substitution of the vinyl group on carbon 2 of heme B porphyrin ring with a hydroxyethyl farnesyl side group. This is Protoheme IX farnesyltransferase from Bordetella pertussis (strain Tohama I / ATCC BAA-589 / NCTC 13251).